The chain runs to 158 residues: Pyruvoyl-dependent arginine decarboxylase (158 aa).

At Ser44 the chain carries Pyruvic acid (Ser).

This sequence belongs to the PdaD family. The cofactor is pyruvate.

It carries out the reaction L-arginine + H(+) = agmatine + CO2. The chain is Pyruvoyl-dependent arginine decarboxylase from Pyrococcus abyssi (strain GE5 / Orsay).